We begin with the raw amino-acid sequence, 637 residues long: Serine/threonine protein kinase ypkA (637 aa).

Residues 20–29 (TFTRSSSTST) show a composition bias toward low complexity. 2 disordered regions span residues 20-63 (TFTR…SLVS) and 104-140 (SSSV…INAA). Residues 40–61 (VVSQTPSISSTNSNGINASESL) show a composition bias toward polar residues. Positions 104–116 (SSSVRPSSSSSHS) are enriched in low complexity. Positions 117-136 (THGQTASFAQSGRPQSTSGG) are enriched in polar residues. Residues 294 to 551 (FDLLKVVGKG…AAEIKSHHFF (258 aa)) enclose the Protein kinase domain. ATP contacts are provided by residues 300–308 (VGKGSFGKV) and K323. D417 (proton acceptor) is an active-site residue. In terms of domain architecture, AGC-kinase C-terminal spans 552 to 623 (ANIDWRKLLQ…NRPVAGLGDA (72 aa)). S593 and S612 each carry phosphoserine. Phosphotyrosine is present on Y613.

The protein belongs to the protein kinase superfamily. Ser/Thr protein kinase family. Interacts with the sakA MAP kinase.

It carries out the reaction L-seryl-[protein] + ATP = O-phospho-L-seryl-[protein] + ADP + H(+). The enzyme catalyses L-threonyl-[protein] + ATP = O-phospho-L-threonyl-[protein] + ADP + H(+). Serine/threonine protein kinase required for vegetative growth and conidiation. Important for fungal survival through the regulation of glycosphingolipid (GSL) biosynthesis and cross talks with MAP kinase pathways such as the cell wall integrity (CWI) and the high osmolarity glycerol (HOG) pathways. This chain is Serine/threonine protein kinase ypkA, found in Aspergillus fumigatus (strain ATCC MYA-4609 / CBS 101355 / FGSC A1100 / Af293) (Neosartorya fumigata).